Reading from the N-terminus, the 233-residue chain is MIWKTLIVAFMATAVLAQEIDLSDQRREQYRNMLAAQCRKMGAEDKVKDVESSVRNFVECLRGIVDPQAIKKEIEEAKPKGELDEVFKKYCAKAPVLKTCISSLLDGVRPCVDKVAIDHYGPLLNTTNQLIDFVCYKDGERIALFIAHGGSECFKNSTEDLKKCAEEMKNSFPSVEAAKAMSLPDKCGKFDDLTTCMVTSLEKCENPTPANMAESLLKFIRKDSPCNAAVPKD.

The signal sequence occupies residues 1–17; that stretch reads MIWKTLIVAFMATAVLA. Asn125 and Asn156 each carry an N-linked (GlcNAc...) asparagine glycan.

The protein belongs to the UPF0408 family. N-glycosylated. As to expression, hemolymph.

The protein resides in the secreted. In Manduca sexta (Tobacco hawkmoth), this protein is 27 kDa hemolymph glycoprotein.